Consider the following 685-residue polypeptide: Probable glucan endo-1,3-beta-glucosidase btgC (685 aa).

Disordered regions lie at residues 1-96, 119-168, and 180-202; these read MSGP…NLGP, GIDA…RDSY, and PAGQ…SPYQ. At 1 to 312 the chain is on the cytoplasmic side; the sequence is MSGPHRSFSF…PTPGGGSRKR (312 aa). Polar residues-rich tracts occupy residues 47–61 and 73–90; these read SARS…SSGF and GQNS…TTPG. Residues 313-333 traverse the membrane as a helical; Signal-anchor for type II membrane protein segment; the sequence is GWIVGLALAFIVVGAIVGGAV. Residues 334-685 lie on the Extracellular side of the membrane; that stretch reads GGTLGNRENE…IPDCGGKTAA (352 aa). The interval 335–369 is disordered; that stretch reads GTLGNRENEAPDTTKSASSDTESNGDLNKDSSEIK. Polar residues predominate over residues 345–360; the sequence is PDTTKSASSDTESNGD. Residues N405, N428, and N456 are each glycosylated (N-linked (GlcNAc...) asparagine). The Proton donor role is filled by E488. Catalysis depends on E587, which acts as the Nucleophile. N-linked (GlcNAc...) asparagine glycosylation occurs at N632.

It belongs to the glycosyl hydrolase 17 family.

It localises to the cell membrane. It catalyses the reaction Hydrolysis of (1-&gt;3)-beta-D-glucosidic linkages in (1-&gt;3)-beta-D-glucans.. Functionally, glucanases play a role in cell expansion during growth, in cell-cell fusion during mating, and in spore release during sporulation. This enzyme may be involved in beta-glucan degradation. Active on laminarin and lichenan. In Aspergillus oryzae (strain ATCC 42149 / RIB 40) (Yellow koji mold), this protein is Probable glucan endo-1,3-beta-glucosidase btgC (btgC).